The sequence spans 91 residues: uncharacterized protein (91 aa).

The helical transmembrane segment at 7-23 (IALVGVVVVLFGALRYQ) threads the bilayer.

It is found in the membrane. This is an uncharacterized protein from Haemophilus influenzae (strain ATCC 51907 / DSM 11121 / KW20 / Rd).